Reading from the N-terminus, the 270-residue chain is Regulatory protein RecX (270 aa).

Belongs to the RecX family.

It localises to the cytoplasm. Functionally, modulates RecA activity. This Bacillus thuringiensis subsp. konkukian (strain 97-27) protein is Regulatory protein RecX.